The chain runs to 131 residues: Proteinase inhibitor (131 aa).

The signal sequence occupies residues 1 to 26 (MSASAKLSRMVCLLCGFFSTGISMAS). Cysteine 51 and cysteine 74 are disulfide-bonded.

This sequence belongs to the protease inhibitor I38 family.

Its subcellular location is the periplasm. Its function is as follows. Inhibitor of the alkaline protease. It forms a non-covalent bond with the protease and may prevent its autocatalytic cleavage in the periplasm. This Pseudomonas aeruginosa (strain ATCC 15692 / DSM 22644 / CIP 104116 / JCM 14847 / LMG 12228 / 1C / PRS 101 / PAO1) protein is Proteinase inhibitor (inh).